The following is a 250-amino-acid chain: MEIDLNADLGEGCGSDEALLDLVSSANIACGWHAGGANAMRDCVRWAVQKGVSIGAHPSFNDPENFGRKEMDLPANDIYAGVLYQLGALSAIAQAEGGRVAHVKPHGALYNQAARDSRIADAIVSAVHDFDPSVAVFALANSGLVTAARNVGLIAVEEVFADRGYRADGSLVPRKEPGALLDDEDKVLARTLSMIREQRVQAVDGQWVPLNAQTICLHGDGPHALAFARRIRGALQDAGIEVHAAGAARA.

The protein belongs to the LamB/PxpA family. Forms a complex composed of PxpA, PxpB and PxpC.

It catalyses the reaction 5-oxo-L-proline + ATP + 2 H2O = L-glutamate + ADP + phosphate + H(+). Catalyzes the cleavage of 5-oxoproline to form L-glutamate coupled to the hydrolysis of ATP to ADP and inorganic phosphate. The chain is 5-oxoprolinase subunit A from Paraburkholderia xenovorans (strain LB400).